We begin with the raw amino-acid sequence, 353 residues long: Carbamoyl phosphate synthase small chain (353 aa).

Positions 1-166 (MSDAYLALET…AETHGNGDTT (166 aa)) are CPSase. Positions 45, 214, and 216 each coordinate L-glutamine. Positions 166 to 349 (TVALVDCGAK…LAMADASYTP (184 aa)) constitute a Glutamine amidotransferase type-1 domain. Cysteine 241 serves as the catalytic Nucleophile. Residues leucine 242, glutamine 245, asparagine 283, glycine 285, and tyrosine 286 each contribute to the L-glutamine site. Catalysis depends on residues histidine 322 and glutamate 324.

Belongs to the CarA family. As to quaternary structure, composed of two chains; the small (or glutamine) chain promotes the hydrolysis of glutamine to ammonia, which is used by the large (or ammonia) chain to synthesize carbamoyl phosphate. Tetramer of heterodimers (alpha,beta)4.

It carries out the reaction hydrogencarbonate + L-glutamine + 2 ATP + H2O = carbamoyl phosphate + L-glutamate + 2 ADP + phosphate + 2 H(+). The catalysed reaction is L-glutamine + H2O = L-glutamate + NH4(+). The protein operates within amino-acid biosynthesis; L-arginine biosynthesis; carbamoyl phosphate from bicarbonate: step 1/1. Its pathway is pyrimidine metabolism; UMP biosynthesis via de novo pathway; (S)-dihydroorotate from bicarbonate: step 1/3. In terms of biological role, small subunit of the glutamine-dependent carbamoyl phosphate synthetase (CPSase). CPSase catalyzes the formation of carbamoyl phosphate from the ammonia moiety of glutamine, carbonate, and phosphate donated by ATP, constituting the first step of 2 biosynthetic pathways, one leading to arginine and/or urea and the other to pyrimidine nucleotides. The small subunit (glutamine amidotransferase) binds and cleaves glutamine to supply the large subunit with the substrate ammonia. The sequence is that of Carbamoyl phosphate synthase small chain from Halobacterium salinarum (strain ATCC 29341 / DSM 671 / R1).